The following is a 163-amino-acid chain: uncharacterized protein (163 aa).

Residues 136-161 (QKYIENHQKEINEHVEKLRTLHKELR) adopt a coiled-coil conformation.

This is an uncharacterized protein from Acanthamoeba polyphaga (Amoeba).